A 292-amino-acid chain; its full sequence is Ribosomal RNA small subunit methyltransferase H (292 aa).

Residues 32–34 (GGH), D51, L87, D101, and Q108 each bind S-adenosyl-L-methionine.

This sequence belongs to the methyltransferase superfamily. RsmH family.

Its subcellular location is the cytoplasm. The catalysed reaction is cytidine(1402) in 16S rRNA + S-adenosyl-L-methionine = N(4)-methylcytidine(1402) in 16S rRNA + S-adenosyl-L-homocysteine + H(+). Its function is as follows. Specifically methylates the N4 position of cytidine in position 1402 (C1402) of 16S rRNA. In Pseudothermotoga lettingae (strain ATCC BAA-301 / DSM 14385 / NBRC 107922 / TMO) (Thermotoga lettingae), this protein is Ribosomal RNA small subunit methyltransferase H.